A 156-amino-acid chain; its full sequence is Small ribosomal subunit protein uS7 (156 aa).

It belongs to the universal ribosomal protein uS7 family. In terms of assembly, part of the 30S ribosomal subunit. Contacts proteins S9 and S11.

In terms of biological role, one of the primary rRNA binding proteins, it binds directly to 16S rRNA where it nucleates assembly of the head domain of the 30S subunit. Is located at the subunit interface close to the decoding center, probably blocks exit of the E-site tRNA. The sequence is that of Small ribosomal subunit protein uS7 from Actinobacillus pleuropneumoniae serotype 5b (strain L20).